A 1651-amino-acid chain; its full sequence is Putative serine/threonine-protein kinase/receptor R818 (1651 aa).

The signal sequence occupies residues 1–19 (MKSIGIFVVALWLTHFCDG). N-linked (GlcNAc...) asparagine; by host glycosylation is found at Asn111, Asn135, Asn190, Asn236, Asn275, Asn276, Asn287, Asn452, Asn455, Asn477, Asn495, Asn540, Asn596, and Asn722. A helical transmembrane segment spans residues 749–769 (IILAIVIPVSFVICCIIIVLV). Residues 793–1057 (LDFMESLGSG…EIMTKLSTLI (265 aa)) enclose the Protein kinase 1 domain. ATP is bound by residues 799 to 807 (LGSGGSGEV) and Lys820. The Proton acceptor role is filled by Asp915. The tract at residues 1089–1115 (IHNNDETKNSFGSTTYGSNTISSSSNT) is disordered. Residues 1100-1115 (GSTTYGSNTISSSSNT) show a composition bias toward low complexity. The Guanylate cyclase domain maps to 1135–1278 (IIVFTDIISA…VTVNIAAKIT (144 aa)). Residues 1394–1645 (IQIGKQIGVG…DVIMGLNDML (252 aa)) enclose the Protein kinase 2 domain. Residues 1400 to 1408 (IGVGSYGIV) and Lys1421 each bind ATP. Asp1515 serves as the catalytic Proton acceptor.

The protein localises to the membrane. It catalyses the reaction L-seryl-[protein] + ATP = O-phospho-L-seryl-[protein] + ADP + H(+). The catalysed reaction is L-threonyl-[protein] + ATP = O-phospho-L-threonyl-[protein] + ADP + H(+). The chain is Putative serine/threonine-protein kinase/receptor R818 from Acanthamoeba polyphaga mimivirus (APMV).